The chain runs to 181 residues: Adenine phosphoribosyltransferase (181 aa).

This sequence belongs to the purine/pyrimidine phosphoribosyltransferase family. As to quaternary structure, homodimer.

The protein resides in the cytoplasm. The enzyme catalyses AMP + diphosphate = 5-phospho-alpha-D-ribose 1-diphosphate + adenine. It functions in the pathway purine metabolism; AMP biosynthesis via salvage pathway; AMP from adenine: step 1/1. In terms of biological role, catalyzes a salvage reaction resulting in the formation of AMP, that is energically less costly than de novo synthesis. The protein is Adenine phosphoribosyltransferase of Rhodopseudomonas palustris (strain HaA2).